The chain runs to 79 residues: MSQEILEKVCSIVSEQLSVEAAEVKSDSNFQNDLGADSLDTVELVMALEEAFDIEIPDEAAEGIATVGDAVKFIEEKKG.

The 76-residue stretch at 3–78 (QEILEKVCSI…DAVKFIEEKK (76 aa)) folds into the Carrier domain. Position 38 is an O-(pantetheine 4'-phosphoryl)serine (S38).

Belongs to the acyl carrier protein (ACP) family. 4'-phosphopantetheine is transferred from CoA to a specific serine of apo-ACP by AcpS. This modification is essential for activity because fatty acids are bound in thioester linkage to the sulfhydryl of the prosthetic group.

Its subcellular location is the cytoplasm. It functions in the pathway lipid metabolism; fatty acid biosynthesis. In terms of biological role, carrier of the growing fatty acid chain in fatty acid biosynthesis. This chain is Acyl carrier protein, found in Prochlorococcus marinus (strain MIT 9312).